Here is a 363-residue protein sequence, read N- to C-terminus: Carbamoyl phosphate synthase small chain (363 aa).

Residues 1–172 form a CPSase region; sequence MKAFLVLDNG…TKYIFGTHTG (172 aa). L-glutamine-binding residues include S45, G224, and G226. In terms of domain architecture, Glutamine amidotransferase type-1 spans 176–362; it reads KLAVYDYGVK…YDLVETTKRG (187 aa). Catalysis depends on C252, which acts as the Nucleophile. Residues L253, Q256, N294, G296, and F297 each contribute to the L-glutamine site. Active-site residues include H335 and E337.

The protein belongs to the CarA family. As to quaternary structure, composed of two chains; the small (or glutamine) chain promotes the hydrolysis of glutamine to ammonia, which is used by the large (or ammonia) chain to synthesize carbamoyl phosphate. Tetramer of heterodimers (alpha,beta)4.

The enzyme catalyses hydrogencarbonate + L-glutamine + 2 ATP + H2O = carbamoyl phosphate + L-glutamate + 2 ADP + phosphate + 2 H(+). It catalyses the reaction L-glutamine + H2O = L-glutamate + NH4(+). Its pathway is amino-acid biosynthesis; L-arginine biosynthesis; carbamoyl phosphate from bicarbonate: step 1/1. It participates in pyrimidine metabolism; UMP biosynthesis via de novo pathway; (S)-dihydroorotate from bicarbonate: step 1/3. Functionally, small subunit of the glutamine-dependent carbamoyl phosphate synthetase (CPSase). CPSase catalyzes the formation of carbamoyl phosphate from the ammonia moiety of glutamine, carbonate, and phosphate donated by ATP, constituting the first step of 2 biosynthetic pathways, one leading to arginine and/or urea and the other to pyrimidine nucleotides. The small subunit (glutamine amidotransferase) binds and cleaves glutamine to supply the large subunit with the substrate ammonia. The sequence is that of Carbamoyl phosphate synthase small chain from Leptospira borgpetersenii serovar Hardjo-bovis (strain L550).